We begin with the raw amino-acid sequence, 552 residues long: MFS-type transporter atr4 (552 aa).

A disordered region spans residues 1–102 (MEDPKSLSAP…NIVDWDGPND (102 aa)). A compositionally biased stretch (low complexity) spans 16–27 (ADTTTADETPAA). 2 stretches are compositionally biased toward polar residues: residues 38–47 (KAGSESSENT) and 71–80 (LRNSSVSRSN). N-linked (GlcNAc...) asparagine glycosylation occurs at Asn73. The next 6 helical transmembrane spans lie at 118–138 (IFLV…LATG), 153–173 (LGSL…LVIA), 182–202 (MPLY…CALG), 214–234 (LQGC…SDLI), 244–264 (GIYA…GGFL), and 272–292 (WLMW…FVVM). N-linked (GlcNAc...) asparagine glycosylation is present at Asn314. Helical transmembrane passes span 346–366 (PIIF…YLLF), 385–405 (GLVY…FGVF), 425–445 (LLPM…YGWS), 452–472 (WIVP…TLVC), 498–518 (VVGA…GIGW), and 521–541 (SLLA…YVYG).

It belongs to the major facilitator superfamily.

Its subcellular location is the cell membrane. Functionally, MFS-type transporter; part of the gene cluster that mediates the biosynthesis of atranorin, a depside of polyketide origin that accumulates in the cortical or medullary layers of lichen thalli. The protein is MFS-type transporter atr4 of Stereocaulon alpinum (Alpine snow lichen).